The sequence spans 150 residues: SsrA-binding protein (150 aa).

It belongs to the SmpB family.

The protein resides in the cytoplasm. Its function is as follows. Required for rescue of stalled ribosomes mediated by trans-translation. Binds to transfer-messenger RNA (tmRNA), required for stable association of tmRNA with ribosomes. tmRNA and SmpB together mimic tRNA shape, replacing the anticodon stem-loop with SmpB. tmRNA is encoded by the ssrA gene; the 2 termini fold to resemble tRNA(Ala) and it encodes a 'tag peptide', a short internal open reading frame. During trans-translation Ala-aminoacylated tmRNA acts like a tRNA, entering the A-site of stalled ribosomes, displacing the stalled mRNA. The ribosome then switches to translate the ORF on the tmRNA; the nascent peptide is terminated with the 'tag peptide' encoded by the tmRNA and targeted for degradation. The ribosome is freed to recommence translation, which seems to be the essential function of trans-translation. The protein is SsrA-binding protein of Thermotoga maritima (strain ATCC 43589 / DSM 3109 / JCM 10099 / NBRC 100826 / MSB8).